Here is a 300-residue protein sequence, read N- to C-terminus: Protein SPEAR2 (300 aa).

The segment covering 1-11 (MCSNNNTSSGS) has biased composition (polar residues). The tract at residues 1–64 (MCSNNNTSSG…PPLSSSPSLP (64 aa)) is disordered. Basic residues predominate over residues 25-38 (CRKKQKKDKVRRRG). Residues 37 to 45 (RGPGVAELE) carry the SPL motif. Basic and acidic residues predominate over residues 43-54 (ELEKIRLQEEYK). The segment covering 55–64 (PPLSSSPSLP) has biased composition (low complexity). Residues 294–300 (IDLNLKL) carry the EAR motif.

As to quaternary structure, homodimer and heterodimer with SPL and SPEARs. Interacts with SPL, SPEAR1, SPEAR3 and SPEAR4. As to expression, expressed in leaves.

Its function is as follows. Adapter-like transcriptional repressor recruiting TPL/TPR corepressors to inhibit TCP transcription factors. May be involved in leaf development. The protein is Protein SPEAR2 of Arabidopsis thaliana (Mouse-ear cress).